The primary structure comprises 335 residues: 34 kDa spicule matrix protein (335 aa).

The N-terminal stretch at 1-17 is a signal peptide; sequence MKGLLLILASLVAIATG. The 166-residue stretch at 29-194 folds into the C-type lectin domain; it reads SGASCYRYFN…ATAMRAFVCE (166 aa). Residues Cys50 and Cys193 are joined by a disulfide bond. The tract at residues 199 to 335 is disordered; the sequence is QNIPPGQQPG…QEAETDVTGS (137 aa). A compositionally biased stretch (gly residues) spans 207–310; it reads PGFGGQQPGF…GGPQRPGMGG (104 aa). A compositionally biased stretch (low complexity) spans 311–323; it reads QPNSPNPRFNRPR.

The protein belongs to the SM50 family. As to expression, embryo spicule.

It is found in the secreted. Its function is as follows. Major matrix protein of the sea urchin embryo spicule which directs crystal growth in certain orientations and inhibit growth in others. The polypeptide is 34 kDa spicule matrix protein (Lytechinus pictus (Painted sea urchin)).